The sequence spans 138 residues: Putative pre-16S rRNA nuclease (138 aa).

This sequence belongs to the YqgF nuclease family.

Its subcellular location is the cytoplasm. Functionally, could be a nuclease involved in processing of the 5'-end of pre-16S rRNA. The polypeptide is Putative pre-16S rRNA nuclease (Klebsiella pneumoniae (strain 342)).